Reading from the N-terminus, the 818-residue chain is Glycerol-3-phosphate acyltransferase (818 aa).

The HXXXXD motif signature appears at 305–310 (HRSHMD).

Belongs to the GPAT/DAPAT family.

It localises to the cell inner membrane. It carries out the reaction sn-glycerol 3-phosphate + an acyl-CoA = a 1-acyl-sn-glycero-3-phosphate + CoA. It functions in the pathway phospholipid metabolism; CDP-diacylglycerol biosynthesis; CDP-diacylglycerol from sn-glycerol 3-phosphate: step 1/3. The protein is Glycerol-3-phosphate acyltransferase of Photorhabdus laumondii subsp. laumondii (strain DSM 15139 / CIP 105565 / TT01) (Photorhabdus luminescens subsp. laumondii).